A 1021-amino-acid chain; its full sequence is Sodium/potassium-transporting ATPase subunit alpha-1 (1021 aa).

The propeptide occupies 1 to 5 (MGKGV). Positions 1 to 11 (MGKGVGRDKYE) are enriched in basic and acidic residues. The interval 1–36 (MGKGVGRDKYEPAAVSEHGDKKKAKKERDMDELKKE) is disordered. Residues 6-85 (GRDKYEPAAV…NALTPPPTTP (80 aa)) lie on the Cytoplasmic side of the membrane. The residue at position 9 (lysine 9) is an N6-acetyllysine. Tyrosine 10 carries the phosphotyrosine modification. Position 16 is a phosphoserine; by PKC (serine 16). The residue at position 21 (lysine 21) is an N6-acetyllysine. The span at 26-36 (KERDMDELKKE) shows a compositional bias: basic and acidic residues. Residues serine 38 and serine 45 each carry the phosphoserine modification. A phosphoinositide-3 kinase binding region spans residues 80–82 (PPP). The chain crosses the membrane as a helical span at residues 86–106 (EWVKFCRQLFGGFSMLLWIGA). The Extracellular portion of the chain corresponds to 107–129 (VLCFLAYGIQAATEEEPQNDNLY). A helical transmembrane segment spans residues 130 to 150 (LGVVLSAVVIITGCFSYYQEA). Residues 151–286 (KSSKIMESFK…GGQTPIAAEI (136 aa)) lie on the Cytoplasmic side of the membrane. Serine 226 is modified (phosphoserine). Tyrosine 258 carries the phosphotyrosine modification. A helical membrane pass occupies residues 287-306 (EHFIHIITGVAVFLGVSFFI). Topologically, residues 307–318 (LSLILEYTWLEA) are extracellular. A helical transmembrane segment spans residues 319–336 (VIFLIGIIVANVPEGLLA). Residues 337 to 770 (TVTVCLTLTA…EEGRLIFDNL (434 aa)) lie on the Cytoplasmic side of the membrane. Residue aspartate 374 is the 4-aspartylphosphate intermediate of the active site. Phosphoserine is present on residues serine 450 and serine 482. Residue lysine 485 coordinates ATP. Position 540 is a phosphotyrosine (tyrosine 540). Positions 594–715 (RAAVPDAVGK…QGAIVAVTGD (122 aa)) are mediates interaction with SCN7A. A Phosphoserine modification is found at serine 666. Positions 715 and 719 each coordinate Mg(2+). The helical transmembrane segment at 771 to 790 (KKSIAYTLTSNIPEITPFLI) threads the bilayer. Topologically, residues 791–800 (FIIANIPLPL) are extracellular. The helical transmembrane segment at 801–821 (GTVTILCIDLGTDMVPAISLA) threads the bilayer. Residues 822 to 841 (YEQAESDIMKRQPRNPQTDK) are Cytoplasmic-facing. A helical membrane pass occupies residues 842-864 (LVNERLISMAYGQIGMIQALGGF). At 865 to 916 (FTYFVIMAENGFLPNHLLGIRVTWDDRWINDVEDSYGQQWTYEQRKIVEFTC) the chain is on the extracellular side. The helical transmembrane segment at 917-936 (HTAFFVSIVVVQWADLVICK) threads the bilayer. The Cytoplasmic portion of the chain corresponds to 937 to 949 (TRRNSVFQQGMKN). Phosphoserine; by PKA is present on serine 941. A helical transmembrane segment spans residues 950 to 968 (KILIFGLFEETALAAFLSY). Residues 969 to 983 (CPGMGVALRMYPLKP) are Extracellular-facing. Residues 984–1004 (TWWFCAFPYSLLIFVYDEVRK) traverse the membrane as a helical segment. The Cytoplasmic portion of the chain corresponds to 1005-1021 (LIIRRRPGGWVEKETYY).

The protein belongs to the cation transport ATPase (P-type) (TC 3.A.3) family. Type IIC subfamily. The sodium/potassium-transporting ATPase is composed of a catalytic alpha subunit, an auxiliary non-catalytic beta subunit and an additional regulatory subunit. Interacts with regulatory subunit FXYD1. Interacts with regulatory subunit FXYD3. Interacts with SIK1. Interacts with SLC35G1 and STIM1. Interacts with CLN3; this interaction regulates the sodium/potassium-transporting ATPase complex localization at the plasma membrane. Interacts with SCN7A; activates ATP1A1 P-type sodium:potassium-exchanging transporter activity which indirectly signals to nearby neurons to regulate sodium homeostasis. Phosphorylation on Tyr-10 modulates pumping activity. Phosphorylation of Ser-941 by PKA modulates the response of ATP1A1 to PKC. Dephosphorylation by protein phosphatase 2A (PP2A) following increases in intracellular sodium, leading to increase catalytic activity.

It localises to the cell membrane. It is found in the basolateral cell membrane. The protein resides in the sarcolemma. Its subcellular location is the cell projection. The protein localises to the axon. It localises to the melanosome. The catalysed reaction is K(+)(out) + Na(+)(in) + ATP + H2O = K(+)(in) + Na(+)(out) + ADP + phosphate + H(+). In terms of biological role, this is the catalytic component of the active enzyme, which catalyzes the hydrolysis of ATP coupled with the exchange of sodium and potassium ions across the plasma membrane. This action creates the electrochemical gradient of sodium and potassium ions, providing the energy for active transport of various nutrients. Could also be part of an osmosensory signaling pathway that senses body-fluid sodium levels and controls salt intake behavior as well as voluntary water intake to regulate sodium homeostasis. This Bos taurus (Bovine) protein is Sodium/potassium-transporting ATPase subunit alpha-1 (ATP1A1).